The following is a 438-amino-acid chain: MESQQLHQNPHSLHGSAYASVTSKEVPSNQDPLAVSASNLPEFDRDSTKVNSQEETTPGTSAVPENHHHVSPQPASVPPPQNGQYQQHGMMTPNKAMASNWAHYQQPSMMTCSHYQTSPAYYQPDPHYPLPQYIPPLSTSSPDPIDSQDQHSEVPQAKTKVRNNVLPPHTLTSEENFSTWVKFYIRFLKNSNLGDIIPNDQGEIKRQMTYEEHAYIYNTFQAFAPFHLLPTWVKQILEINYSDILTVLCKSVSKMQTNNQELKDWIALANLEYNGSTSADTFEITVSTIIQRLKENNINVSDRLACQLILKGLSGDFKYLRNQYRTKTNMKLSQLFAEIQLIYDENKIMNLNKPSQYKQHSEYKNVSRTSPNTTNTKVTTRNYHRTNSSKPRAAKAHNIATSSKFSRVNNDHINESTVSSQYLSDDNELSLRPATERI.

Polar residues-rich tracts occupy residues Met1–His11, Ala19–Asn39, and Lys49–Thr60. Disordered regions lie at residues Met1–His88, Lys364–His397, and Val418–Ile438. Positions Glu295 to His397 are RNA-binding. The segment covering Thr369–Arg381 has biased composition (low complexity).

As to quaternary structure, homotrimer.

The protein resides in the cytoplasm. Capsid protein (CA) is the structural component of the virus-like particle (VLP), forming the shell that encapsulates the retrotransposons dimeric RNA genome. The particles are assembled from trimer-clustered units and there are holes in the capsid shells that allow for the diffusion of macromolecules. CA also has nucleocapsid-like chaperone activity, promoting primer tRNA(i)-Met annealing to the multipartite primer-binding site (PBS), dimerization of Ty2 RNA and initiation of reverse transcription. This chain is Transposon Ty2-LR2 Gag polyprotein (TY2A-LR2), found in Saccharomyces cerevisiae (strain ATCC 204508 / S288c) (Baker's yeast).